The following is a 93-amino-acid chain: MICAVYKSRRKVDSYLFVEKRNVFERVPDALMKMFGEPDLVMMLPLMKRDHLGFADINKVKSELAEKGYYLQLPPPKVNLLEQHKLEIGYSRD.

In terms of domain architecture, YcgL spans M1–K85.

The polypeptide is YcgL domain-containing protein Ssed_2518 (Shewanella sediminis (strain HAW-EB3)).